A 599-amino-acid polypeptide reads, in one-letter code: Cytosolic Fe-S cluster assembly factor nar1 (599 aa).

Residues C20, C62, C65, C68, C210, C265, C468, and C472 each coordinate [4Fe-4S] cluster.

The protein belongs to the NARF family.

Its function is as follows. Component of the cytosolic Fe/S protein assembly machinery. Required for maturation of extramitochondrial Fe/S proteins. May play a role in the transfer of pre-assembled Fe/S clusters to target apoproteins. The chain is Cytosolic Fe-S cluster assembly factor nar1 (nar1) from Aspergillus terreus (strain NIH 2624 / FGSC A1156).